Consider the following 156-residue polypeptide: Single-stranded DNA-binding protein 1 (156 aa).

The SSB domain maps to 1 to 104; sequence MLNRTILVGR…VVADSIQFLE (104 aa). Residues 122–146 form a disordered region; sequence QTRGQSQYSNNKPVKDNPFANANCP.

In terms of assembly, homotetramer.

The chain is Single-stranded DNA-binding protein 1 (ssb1) from Staphylococcus aureus (strain MSSA476).